The chain runs to 290 residues: Succinate dehydrogenase [ubiquinone] iron-sulfur subunit, mitochondrial (290 aa).

A mitochondrion-targeting transit peptide spans 1 to 38 (MAAAVVGVSLRRGVPARFLRAGLRPVRGLEAVHGICRG). The 2Fe-2S ferredoxin-type domain maps to 50–143 (KKFSIYRWDP…TTKIYPLPHM (94 aa)). Residues Cys-103, Cys-108, Cys-111, and Cys-123 each coordinate [2Fe-2S] cluster. Residues 186-216 (DRQKLDGLYECILCACCSTSCPSYWWNGDKY) enclose the 4Fe-4S ferredoxin-type domain. Residues Cys-196, Cys-199, and Cys-202 each contribute to the [4Fe-4S] cluster site. Cys-206 is a [3Fe-4S] cluster binding site. Trp-211 provides a ligand contact to a ubiquinone. Residues Cys-253 and Cys-259 each coordinate [3Fe-4S] cluster. Cys-263 contacts [4Fe-4S] cluster.

The protein belongs to the succinate dehydrogenase/fumarate reductase iron-sulfur protein family. As to quaternary structure, component of complex II composed of four subunits: the flavoprotein (FP) SDHA, iron-sulfur protein (IP) SDHB, and a cytochrome b560 composed of SDHC and SDHD. [2Fe-2S] cluster is required as a cofactor. [3Fe-4S] cluster serves as cofactor. Requires [4Fe-4S] cluster as cofactor.

The protein resides in the mitochondrion inner membrane. It carries out the reaction a quinone + succinate = fumarate + a quinol. The catalysed reaction is (R)-malate + a quinone = enol-oxaloacetate + a quinol. The enzyme catalyses (S)-malate + a quinone = enol-oxaloacetate + a quinol. It participates in carbohydrate metabolism; tricarboxylic acid cycle; fumarate from succinate (eukaryal route): step 1/1. Its activity is regulated as follows. Enol-oxaloacetate inhibits the succinate dehydrogenase activity. Functionally, iron-sulfur protein (IP) subunit of the succinate dehydrogenase complex (mitochondrial respiratory chain complex II), responsible for transferring electrons from succinate to ubiquinone (coenzyme Q). SDH also oxidizes malate to the non-canonical enol form of oxaloacetate, enol-oxaloacetate. Enol-oxaloacetate, which is a potent inhibitor of the succinate dehydrogenase activity, is further isomerized into keto-oxaloacetate. The protein is Succinate dehydrogenase [ubiquinone] iron-sulfur subunit, mitochondrial (SDHB) of Gallus gallus (Chicken).